A 121-amino-acid chain; its full sequence is UPF0145 protein SGR_4080 (121 aa).

The protein belongs to the UPF0145 family.

This chain is UPF0145 protein SGR_4080, found in Streptomyces griseus subsp. griseus (strain JCM 4626 / CBS 651.72 / NBRC 13350 / KCC S-0626 / ISP 5235).